Here is a 313-residue protein sequence, read N- to C-terminus: Ornithine carbamoyltransferase (313 aa).

Residues 57–60, glutamine 84, arginine 108, and 135–138 each bind carbamoyl phosphate; these read STRT and HPTQ. L-ornithine is bound by residues asparagine 167, aspartate 231, and 235–236; that span reads SM. Residues 272 to 273 and arginine 300 each bind carbamoyl phosphate; that span reads CL.

The protein belongs to the aspartate/ornithine carbamoyltransferase superfamily. OTCase family.

It localises to the cytoplasm. The catalysed reaction is carbamoyl phosphate + L-ornithine = L-citrulline + phosphate + H(+). The protein operates within amino-acid biosynthesis; L-arginine biosynthesis; L-arginine from L-ornithine and carbamoyl phosphate: step 1/3. Reversibly catalyzes the transfer of the carbamoyl group from carbamoyl phosphate (CP) to the N(epsilon) atom of ornithine (ORN) to produce L-citrulline. The protein is Ornithine carbamoyltransferase of Caldanaerobacter subterraneus subsp. tengcongensis (strain DSM 15242 / JCM 11007 / NBRC 100824 / MB4) (Thermoanaerobacter tengcongensis).